A 150-amino-acid polypeptide reads, in one-letter code: Ribosomal RNA large subunit methyltransferase H (150 aa).

S-adenosyl-L-methionine is bound by residues Ala100 and 118 to 123 (LSEMTF).

It belongs to the RNA methyltransferase RlmH family. As to quaternary structure, homodimer.

Its subcellular location is the cytoplasm. It catalyses the reaction pseudouridine(1915) in 23S rRNA + S-adenosyl-L-methionine = N(3)-methylpseudouridine(1915) in 23S rRNA + S-adenosyl-L-homocysteine + H(+). In terms of biological role, specifically methylates the pseudouridine at position 1915 (m3Psi1915) in 23S rRNA. This chain is Ribosomal RNA large subunit methyltransferase H, found in Helicobacter pylori (strain P12).